The primary structure comprises 133 residues: MSLNRHQIRESAFKIIFAKSANPDADLSELQDQVLEEFHETEAPDQFLKDLVMGVSLNLEAINETISGELKKGWTVKRLESPDRVILQMGTYEIKYTETPDKVAINEALELAKKYTDEDARKFINGVLSNIAK.

Belongs to the NusB family.

Involved in transcription antitermination. Required for transcription of ribosomal RNA (rRNA) genes. Binds specifically to the boxA antiterminator sequence of the ribosomal RNA (rrn) operons. This chain is Transcription antitermination protein NusB, found in Pediococcus pentosaceus (strain ATCC 25745 / CCUG 21536 / LMG 10740 / 183-1w).